The following is a 338-amino-acid chain: Taste receptor type 2 member 39 (338 aa).

The Extracellular segment spans residues 1–30; sequence MLGRCFPPNTKEKQQLRMIKLCDPAESELS. A helical membrane pass occupies residues 31–51; the sequence is PFLITLTLAVLLAEYLTGIIA. Residues 52-74 lie on the Cytoplasmic side of the membrane; sequence NGFITAIHAAECVQNKSVSTSGR. The chain crosses the membrane as a helical span at residues 75-95; the sequence is ILVFLSVSRIALQSLMMLEIT. The Extracellular segment spans residues 96–116; the sequence is ISSTSLSFYSEDTVYYAFKIS. A helical transmembrane segment spans residues 117 to 137; the sequence is FIFLNFCSLWFAAWLSFFYFV. Topologically, residues 138–156 are cytoplasmic; it reads KIANFSYPLFLKLRWRISG. Residues 157–177 traverse the membrane as a helical segment; the sequence is LIPWLLWLSVFISFSHSMFCI. Over 178–205 the chain is Extracellular; sequence NICTGYCDNSFPIHSSNSTEKTYFSEIS. Asparagine 194 carries an N-linked (GlcNAc...) asparagine glycan. The helical transmembrane segment at 206–226 threads the bilayer; it reads VVSLAFFFNLGIVIPLIMFIL. Topologically, residues 227-262 are cytoplasmic; sequence AAILLILSLKRHTLYMXSNATGSKDPSMEAHIGAIK. The chain crosses the membrane as a helical span at residues 263-283; it reads ATSYFLILYIFNAVALFIYLS. Residues 284–291 lie on the Extracellular side of the membrane; it reads NMFDINSL. Residues 292–312 traverse the membrane as a helical segment; the sequence is WNTLCQIIMAAYPASHSILLI. Residues 313–338 lie on the Cytoplasmic side of the membrane; it reads KDNPGLRRAWKQLQHRLHLYPKEWTL.

Belongs to the G-protein coupled receptor T2R family.

The protein resides in the membrane. Its function is as follows. Receptor that may play a role in the perception of bitterness and is gustducin-linked. May play a role in sensing the chemical composition of the gastrointestinal content. The activity of this receptor may stimulate alpha gustducin, mediate PLC-beta-2 activation and lead to the gating of TRPM5. The sequence is that of Taste receptor type 2 member 39 (TAS2R39) from Papio hamadryas (Hamadryas baboon).